The following is a 178-amino-acid chain: Large ribosomal subunit protein uL6 (178 aa).

The protein belongs to the universal ribosomal protein uL6 family. Part of the 50S ribosomal subunit.

Its function is as follows. This protein binds to the 23S rRNA, and is important in its secondary structure. It is located near the subunit interface in the base of the L7/L12 stalk, and near the tRNA binding site of the peptidyltransferase center. The polypeptide is Large ribosomal subunit protein uL6 (Helicobacter pylori (strain G27)).